The following is a 124-amino-acid chain: Small ribosomal subunit protein bS6 (124 aa).

The segment at 96-124 (ETGPSPMMKEVQREEAKKSAATQPSEAQA) is disordered. Polar residues predominate over residues 115 to 124 (AATQPSEAQA).

This sequence belongs to the bacterial ribosomal protein bS6 family.

Functionally, binds together with bS18 to 16S ribosomal RNA. This chain is Small ribosomal subunit protein bS6, found in Paraburkholderia phytofirmans (strain DSM 17436 / LMG 22146 / PsJN) (Burkholderia phytofirmans).